Reading from the N-terminus, the 572-residue chain is Potassium-transporting ATPase potassium-binding subunit (572 aa).

Transmembrane regions (helical) follow at residues 6–26 (ILFVVFIFTLVIITKPLGTYI), 66–86 (FFSLLSFSIMAFIFVFVVLLL), 135–155 (ALAVQNFVSAAVGLCVAIVLI), 177–197 (IFWILLPISIIIAIVYIFQGV), 251–271 (TIITNYIQMVSIFAIAAALTY), 283–303 (GWMIFAVMLVLFVISLMVMTI), 382–402 (IFGGIGAGFYGFFMFLMLAVF), 428–448 (MFALLISPCCVLVFTGLAAVI), 493–513 (ITIALSMLIGRFGVIFAVMML), and 537–557 (FIFSVLVFFTIVLIGGLTIFP).

It belongs to the KdpA family. In terms of assembly, the system is composed of three essential subunits: KdpA, KdpB and KdpC.

It is found in the cell inner membrane. Functionally, part of the high-affinity ATP-driven potassium transport (or Kdp) system, which catalyzes the hydrolysis of ATP coupled with the electrogenic transport of potassium into the cytoplasm. This subunit binds the periplasmic potassium ions and delivers the ions to the membrane domain of KdpB through an intramembrane tunnel. The protein is Potassium-transporting ATPase potassium-binding subunit of Francisella philomiragia subsp. philomiragia (strain ATCC 25017 / CCUG 19701 / FSC 153 / O#319-036).